The chain runs to 87 residues: Gibberellin-regulated protein 8 (87 aa).

The signal sequence occupies residues M1 to A25.

It belongs to the GASA family. In terms of processing, six disulfide bonds may be present. Expressed in roots and developing seeds.

The protein localises to the secreted. Functionally, gibberellin-regulated protein that may function in hormonal controlled steps of development such as seed germination, flowering and seed maturation. In Arabidopsis thaliana (Mouse-ear cress), this protein is Gibberellin-regulated protein 8.